The chain runs to 361 residues: Dynein axonemal assembly factor 8 (361 aa).

2 disordered regions span residues 65 to 191 (DPAG…ERRK) and 309 to 334 (AQPG…RRPL). Residues 136–157 (TLNTSASQSPRQGPQGEATRSP) show a composition bias toward polar residues. Ser142 and Ser144 each carry phosphoserine. The segment covering 321 to 334 (GSSSSSGHLGRRPL) has biased composition (low complexity).

The protein localises to the dynein axonemal particle. Its subcellular location is the cytoplasm. Functionally, in cyliated cells, dynein axonemal particle-specific protein required for deployment of ODA to the axoneme. Interacts with outer dynein arm (ODA) subunits. This chain is Dynein axonemal assembly factor 8 (DNAAF8), found in Bos taurus (Bovine).